The sequence spans 248 residues: 2,3-bisphosphoglycerate-dependent phosphoglycerate mutase (248 aa).

Residues 10-17, 23-24, arginine 62, 89-92, lysine 100, 116-117, and 183-184 contribute to the substrate site; these read RHGQSQWN, TG, ERHY, RR, and GN. Residue histidine 11 is the Tele-phosphohistidine intermediate of the active site. The active-site Proton donor/acceptor is glutamate 89.

It belongs to the phosphoglycerate mutase family. BPG-dependent PGAM subfamily.

The enzyme catalyses (2R)-2-phosphoglycerate = (2R)-3-phosphoglycerate. It participates in carbohydrate degradation; glycolysis; pyruvate from D-glyceraldehyde 3-phosphate: step 3/5. In terms of biological role, catalyzes the interconversion of 2-phosphoglycerate and 3-phosphoglycerate. The polypeptide is 2,3-bisphosphoglycerate-dependent phosphoglycerate mutase (Corynebacterium kroppenstedtii (strain DSM 44385 / JCM 11950 / CIP 105744 / CCUG 35717)).